The following is a 132-amino-acid chain: Small ribosomal subunit protein uS8 (132 aa).

The protein belongs to the universal ribosomal protein uS8 family. Part of the 30S ribosomal subunit. Contacts proteins S5 and S12.

In terms of biological role, one of the primary rRNA binding proteins, it binds directly to 16S rRNA central domain where it helps coordinate assembly of the platform of the 30S subunit. The chain is Small ribosomal subunit protein uS8 from Streptococcus agalactiae serotype Ia (strain ATCC 27591 / A909 / CDC SS700).